The sequence spans 303 residues: UDP-N-acetylenolpyruvoylglucosamine reductase (303 aa).

Residues 27–207 (KVGGISQVFY…TSISQKLQKI (181 aa)) enclose the FAD-binding PCMH-type domain. Residue arginine 175 is part of the active site. Residue serine 224 is the Proton donor of the active site. The active site involves glutamate 294.

It belongs to the MurB family. FAD serves as cofactor.

The protein localises to the cytoplasm. The enzyme catalyses UDP-N-acetyl-alpha-D-muramate + NADP(+) = UDP-N-acetyl-3-O-(1-carboxyvinyl)-alpha-D-glucosamine + NADPH + H(+). Its pathway is cell wall biogenesis; peptidoglycan biosynthesis. In terms of biological role, cell wall formation. The polypeptide is UDP-N-acetylenolpyruvoylglucosamine reductase (Orientia tsutsugamushi (strain Boryong) (Rickettsia tsutsugamushi)).